Consider the following 208-residue polypeptide: Outer-membrane lipoprotein LolB (208 aa).

An N-terminal signal peptide occupies residues 1-17; that stretch reads MIRRLLGVALLTGAITG. Cysteine 18 carries the N-palmitoyl cysteine lipid modification. Residue cysteine 18 is the site of S-diacylglycerol cysteine attachment.

Belongs to the LolB family. In terms of assembly, monomer.

It localises to the cell outer membrane. In terms of biological role, plays a critical role in the incorporation of lipoproteins in the outer membrane after they are released by the LolA protein. The polypeptide is Outer-membrane lipoprotein LolB (Marinobacter nauticus (strain ATCC 700491 / DSM 11845 / VT8) (Marinobacter aquaeolei)).